A 108-amino-acid chain; its full sequence is MKRLHLAPWTSLVLGLAFLSFHPVYLAEASSGSNSTSTVHHPENLETLEQCPNVDFCPQAARCCHTGVDEYGWIAAAVGWSLLFLTLILLCVDKLMKLTPDESKDLQA.

A signal peptide spans 1 to 27 (MKRLHLAPWTSLVLGLAFLSFHPVYLA). The Extracellular segment spans residues 28 to 71 (EASSGSNSTSTVHHPENLETLEQCPNVDFCPQAARCCHTGVDEY). The N-linked (GlcNAc...) asparagine glycan is linked to N34. Residues 72 to 92 (GWIAAAVGWSLLFLTLILLCV) form a helical membrane-spanning segment. Residues 93-108 (DKLMKLTPDESKDLQA) are Cytoplasmic-facing.

Its subcellular location is the membrane. The chain is Transmembrane protein 213 (TMEM213) from Bos taurus (Bovine).